The chain runs to 277 residues: MEMO1 family protein Tpet_0837 (277 aa).

The protein belongs to the MEMO1 family.

In Thermotoga petrophila (strain ATCC BAA-488 / DSM 13995 / JCM 10881 / RKU-1), this protein is MEMO1 family protein Tpet_0837.